We begin with the raw amino-acid sequence, 1006 residues long: DNA polymerase (1006 aa).

Belongs to the DNA polymerase type-B family. Interacts with OPG148. Component of the Uracil-DNA glycosylase(UDG)-OPG148-polymerase complex; OPG148 and OPG116/UDG form a heterodimeric processivity factor that associates with OPG071 to form the processive polymerase holoenzyme.

It carries out the reaction DNA(n) + a 2'-deoxyribonucleoside 5'-triphosphate = DNA(n+1) + diphosphate. In terms of biological role, catalyzes DNA synthesis. Acquires processivity by associating with a heterodimeric processivity factor comprised of the viral OPG148 and OPG116 proteins, thereby forming the DNA polymerase holoenzyme. Displays 3'- to 5' exonuclease activity. Might participate in viral DNA recombination. Does not perform OPG116/D4synthesis across an abasic site. In Homo sapiens (Human), this protein is DNA polymerase (OPG071).